The chain runs to 324 residues: Beta-ketoacyl-[acyl-carrier-protein] synthase III (324 aa).

Residues Cys-112 and His-249 contribute to the active site. The interval 250-254 is ACP-binding; it reads QANDR. Residue Asn-279 is part of the active site.

It belongs to the thiolase-like superfamily. FabH family. In terms of assembly, homodimer.

It localises to the cytoplasm. It carries out the reaction malonyl-[ACP] + acetyl-CoA + H(+) = 3-oxobutanoyl-[ACP] + CO2 + CoA. Its pathway is lipid metabolism; fatty acid biosynthesis. In terms of biological role, catalyzes the condensation reaction of fatty acid synthesis by the addition to an acyl acceptor of two carbons from malonyl-ACP. Catalyzes the first condensation reaction which initiates fatty acid synthesis and may therefore play a role in governing the total rate of fatty acid production. Possesses both acetoacetyl-ACP synthase and acetyl transacylase activities. Its substrate specificity determines the biosynthesis of branched-chain and/or straight-chain of fatty acids. This chain is Beta-ketoacyl-[acyl-carrier-protein] synthase III, found in Streptococcus pneumoniae serotype 2 (strain D39 / NCTC 7466).